A 341-amino-acid polypeptide reads, in one-letter code: Geranylfarnesyl diphosphate synthase (341 aa).

3 residues coordinate isopentenyl diphosphate: Lys47, Arg50, and Gln95. Residues Asp102 and Asp106 each contribute to the Mg(2+) site. Arg111 serves as a coordination point for an all-trans-polyprenyl diphosphate. Position 112 (Arg112) interacts with isopentenyl diphosphate. An all-trans-polyprenyl diphosphate-binding residues include Lys193, Thr194, and Gln231.

Belongs to the FPP/GGPP synthase family. In terms of assembly, homodimer. Mg(2+) is required as a cofactor.

The protein localises to the cytoplasm. The catalysed reaction is isopentenyl diphosphate + (2E,6E,10E)-geranylgeranyl diphosphate = (2E,6E,10E,14E)-geranylfarnesyl diphosphate + diphosphate. Functionally, probably involved in biosynthesis of the precursor for C25 (sesterterpanyl chain) moiety of C20-C25 diether (2-O-sesterterpanyl-3-O-phytanyl-sn-glycer) membrane lipid. Catalyzes the condensation of isopentenyl pyrophosphate with the allylic pyrophosphates to yield geranylfarnesyl diphosphate (GFPP). Geranylgeranyl diphosphate (GGPP) is the preferred substrate, but dimethylallyl diphosphate (DMAPP) and farnesyl diphosphate (FPP) can also be used as allylic substrate. The protein is Geranylfarnesyl diphosphate synthase (idsA3) of Natronomonas pharaonis (strain ATCC 35678 / DSM 2160 / CIP 103997 / JCM 8858 / NBRC 14720 / NCIMB 2260 / Gabara) (Halobacterium pharaonis).